The following is a 76-amino-acid chain: Acyl carrier protein (76 aa).

A Carrier domain is found at 1-75 (MVLEKIKTLM…DVVLYIEKNL (75 aa)). O-(pantetheine 4'-phosphoryl)serine is present on serine 35.

This sequence belongs to the acyl carrier protein (ACP) family. Post-translationally, 4'-phosphopantetheine is transferred from CoA to a specific serine of apo-ACP by AcpS. This modification is essential for activity because fatty acids are bound in thioester linkage to the sulfhydryl of the prosthetic group.

Its subcellular location is the cytoplasm. The protein operates within lipid metabolism; fatty acid biosynthesis. Functionally, carrier of the growing fatty acid chain in fatty acid biosynthesis. This Phytoplasma australiense protein is Acyl carrier protein.